A 78-amino-acid polypeptide reads, in one-letter code: MMAAPRRPFFRRRKTCPFSGAGAPKIDYKDIKLLLRFVSERGKIVPSRITAVSAKKQRELARAIKRARFLSLLPYVLK.

The protein belongs to the bacterial ribosomal protein bS18 family. In terms of assembly, part of the 30S ribosomal subunit. Forms a tight heterodimer with protein bS6.

In terms of biological role, binds as a heterodimer with protein bS6 to the central domain of the 16S rRNA, where it helps stabilize the platform of the 30S subunit. This chain is Small ribosomal subunit protein bS18, found in Rhodospirillum rubrum (strain ATCC 11170 / ATH 1.1.1 / DSM 467 / LMG 4362 / NCIMB 8255 / S1).